Here is a 1441-residue protein sequence, read N- to C-terminus: uncharacterized protein (1441 aa).

Disordered stretches follow at residues 1-95, 150-204, 224-289, 401-477, 529-661, 680-760, 776-810, 849-899, 980-1118, 1161-1185, 1209-1321, 1348-1402, and 1421-1441; these read MGFL…EVIS, NGGI…QQQF, KPHQ…GEGE, HSNG…QLHQ, RHES…QPQQ, LNKD…KSQT, RKSS…HIQQ, QQQF…TQQL, RGGS…DNNN, KSLK…NENN, NIES…YRSY, GHNS…HIFF, and LKFN…SILE. The span at 19–38 shows a compositional bias: low complexity; it reads NDNSFDGGSSSYNNNNNNNN. Over residues 39–56 the composition is skewed to polar residues; it reads QPITYTPTAIRSPNNKTM. Low complexity-rich tracts occupy residues 57–91, 153–187, 227–283, 416–445, 555–564, and 572–635; these read SQSQ…GNGN, ISQP…TTTP, QQQQ…SLQN, NNNN…GINN, GNTDGVNIDN, and NNNN…TNNT. The span at 636 to 645 shows a compositional bias: polar residues; sequence ATPSVINGDS. Low complexity-rich tracts occupy residues 648–661 and 680–700; these read QEQP…QPQQ and LNKD…DDNN. A compositionally biased stretch (basic and acidic residues) spans 703 to 720; sequence SREEMENILKKSQQDSNK. Residues 729-751 are compositionally biased toward polar residues; it reads EDSNSGSPTFQDFQSSAAASNVS. 2 stretches are compositionally biased toward low complexity: residues 780–810 and 849–880; these read DSLN…HIQQ and QQQF…NSGS. Over residues 881 to 892 the composition is skewed to gly residues; it reads INGGSNSGGGGV. Over residues 981–994 the composition is skewed to polar residues; sequence GGSTNRTTPPFLTP. The segment covering 995 to 1067 has biased composition (low complexity); the sequence is NTSQTNLSSL…NKQTANNTTN (73 aa). Positions 1068-1087 are enriched in polar residues; that stretch reads DFSFDQNTDLRSSTNSLTIG. Positions 1088–1118 are enriched in low complexity; the sequence is SNSNFSSLKNSLNLENPENNNNPDKNVDNNN. 2 stretches are compositionally biased toward low complexity: residues 1225–1249 and 1257–1291; these read DNNN…SLRN and NISN…NNNE. The span at 1362-1373 shows a compositional bias: basic and acidic residues; sequence RHKDSIGDKEMD.

This is an uncharacterized protein from Dictyostelium discoideum (Social amoeba).